Reading from the N-terminus, the 87-residue chain is U14-lycotoxin-Ls1b (87 aa).

The first 20 residues, 1-20 (MNSKVFVVLLLLALSTCVLS), serve as a signal peptide directing secretion. The WAP domain occupies 21-66 (EKYCPTPRNTSCKKMNIRNNCCRDSDCTSNAFCCAEPCGNFCHKAS). Disulfide bonds link C24-C54, C32-C58, C41-C53, C42-C80, and C47-C62.

This sequence belongs to the venom protein 11 family. 01 (wap-1) subfamily. Contains 5 disulfide bonds. As to expression, expressed by the venom gland.

The protein resides in the secreted. In terms of biological role, has antibacterial activity. The polypeptide is U14-lycotoxin-Ls1b (Lycosa singoriensis (Wolf spider)).